Here is a 173-residue protein sequence, read N- to C-terminus: Alpha-crystallin A chain (173 aa).

An N-acetylmethionine modification is found at Met1. The segment at 1 to 63 (MDIAIQHPWF…RTVLDSGISE (63 aa)) is required for complex formation with BFSP1 and BFSP2. A Deamidated glutamine; partial modification is found at Gln6. At Ser45 the chain carries Phosphoserine. Residue Gln50 is modified to Deamidated glutamine; partial. The region spanning 52 to 162 (LFRTVLDSGI…GHSERAIPVS (111 aa)) is the sHSP domain. Position 70 is an N6-acetyllysine (Lys70). At Gln90 the chain carries Deamidated glutamine; partial. Position 99 is an N6-acetyllysine (Lys99). Residue His100 coordinates Zn(2+). The residue at position 101 (Asn101) is a Deamidated asparagine; partial. Zn(2+) contacts are provided by Glu102 and His107. The residue at position 122 (Ser122) is a Phosphoserine. Asn123 is subject to Deamidated asparagine; partial. The interval 144–173 (PKIPSGMDAGHSERAIPVSREEKPGSAPSS) is disordered. Positions 153-167 (GHSERAIPVSREEKP) are enriched in basic and acidic residues. His154 provides a ligand contact to Zn(2+). An O-linked (GlcNAc) serine glycan is attached at Ser162.

The protein belongs to the small heat shock protein (HSP20) family. As to quaternary structure, heteromer composed of three CRYAA and one CRYAB subunits. Inter-subunit bridging via zinc ions enhances stability, which is crucial as there is no protein turn over in the lens. Can also form homodimers and homotetramers (dimers of dimers) which serve as the building blocks of homooligomers. Within homooligomers, the zinc-binding motif is created from residues of 3 different molecules. His-100 and Glu-102 from one molecule are ligands of the zinc ion, and His-107 and His-154 residues from additional molecules complete the site with tetrahedral coordination geometry. Part of a complex required for lens intermediate filament formation composed of BFSP1, BFSP2 and CRYAA. In terms of processing, acetylation at Lys-70 may increase chaperone activity. Post-translationally, undergoes age-dependent proteolytical cleavage at the C-terminus.

The protein localises to the cytoplasm. The protein resides in the nucleus. In terms of biological role, contributes to the transparency and refractive index of the lens. Acts as a chaperone, preventing aggregation of various proteins under a wide range of stress conditions. Required for the correct formation of lens intermediate filaments as part of a complex composed of BFSP1, BFSP2 and CRYAA. The polypeptide is Alpha-crystallin A chain (CRYAA) (Equus caballus (Horse)).